We begin with the raw amino-acid sequence, 123 residues long: MDVCTITGMTARGRLRVSRSSRWCWVQGGGMYMATRLGCIQREMCEGAVSGLWEEGEDGGTRTQMGKRAREVGLEEGVLLLWRTLDLGGVGGRKLGSEGQSLSENSEQRSLMRWGCGGSSERR.

The disordered stretch occupies residues 89-123 (GVGGRKLGSEGQSLSENSEQRSLMRWGCGGSSERR). Polar residues predominate over residues 98-109 (EGQSLSENSEQR).

This is an uncharacterized protein from Encephalitozoon cuniculi (strain GB-M1) (Microsporidian parasite).